Reading from the N-terminus, the 163-residue chain is Large ribosomal subunit protein uL15 (163 aa).

Basic residues predominate over residues 1-29 (MSKKRRQRGSRTHGGGSHKNRRGAGHRGG). 2 disordered regions span residues 1–59 (MSKK…KTRR) and 135–163 (VADG…DEES). 2 stretches are compositionally biased toward basic and acidic residues: residues 33–46 (AGRD…HEPL) and 142–154 (LSER…AEKD).

The protein belongs to the universal ribosomal protein uL15 family. Part of the 50S ribosomal subunit.

Its function is as follows. Binds to the 23S rRNA. In Natronomonas pharaonis (strain ATCC 35678 / DSM 2160 / CIP 103997 / JCM 8858 / NBRC 14720 / NCIMB 2260 / Gabara) (Halobacterium pharaonis), this protein is Large ribosomal subunit protein uL15.